A 94-amino-acid chain; its full sequence is Small ribosomal subunit protein bS20c (94 aa).

This sequence belongs to the bacterial ribosomal protein bS20 family.

It is found in the plastid. Its subcellular location is the chloroplast. Binds directly to 16S ribosomal RNA. This Porphyra purpurea (Red seaweed) protein is Small ribosomal subunit protein bS20c.